The sequence spans 230 residues: Ribonuclease 3 (230 aa).

Residues 5-125 form the RNase III domain; sequence YSRFYNILGY…VIGAIYLDSD (121 aa). Position 40 (glutamate 40) interacts with Mg(2+). The active site involves aspartate 44. Positions 111 and 114 each coordinate Mg(2+). Glutamate 114 is a catalytic residue. The DRBM domain occupies 153-223; the sequence is DSKSKLQEIL…AEKMIEMLSQ (71 aa).

This sequence belongs to the ribonuclease III family. In terms of assembly, homodimer. Mg(2+) serves as cofactor.

The protein localises to the cytoplasm. It carries out the reaction Endonucleolytic cleavage to 5'-phosphomonoester.. Digests double-stranded RNA. Involved in the processing of primary rRNA transcript to yield the immediate precursors to the large and small rRNAs (23S and 16S). Processes some mRNAs, and tRNAs when they are encoded in the rRNA operon. Processes pre-crRNA and tracrRNA of type II CRISPR loci if present in the organism. The sequence is that of Ribonuclease 3 from Francisella tularensis subsp. holarctica (strain LVS).